Here is a 113-residue protein sequence, read N- to C-terminus: UPF0060 membrane protein CV_3485 (113 aa).

A run of 4 helical transmembrane segments spans residues 12–32 (GLFV…WLVL), 37–57 (SLWL…LLTL), 67–87 (AAYG…VDGV), and 91–111 (RWDA…MLAP).

It belongs to the UPF0060 family.

Its subcellular location is the cell inner membrane. This chain is UPF0060 membrane protein CV_3485, found in Chromobacterium violaceum (strain ATCC 12472 / DSM 30191 / JCM 1249 / CCUG 213 / NBRC 12614 / NCIMB 9131 / NCTC 9757 / MK).